The sequence spans 412 residues: MKAQLLTIGDELLIGQTTNTNAAWLGGRLSRLGVRMTRTVTVGDAREAIFRELDRAYEEARLVICTGGLGPTHDDLTRTVIADYFGAPLQTDPDVLERVRQYYDRRNRDVPPSAPALAQRPEGFETLDNPVGAAVGLWHEAPDGRLIVLLPGIPEEMTAIFEASVQPRLEEQSGVGEVRHRTLVTAGIGETALQEKLGDLSDVLGDDVSLAYLPSTSGVRLRLSADARQTTAGARLDTVEAAIRERAGDDIIGTGDVTLEAVLGDALRARDATIASAESATGGLIGHRLTGVSGSSDYYLGSVVAYANSAKKTVLGVDEAAIREHGAVSEAVAVQMAEGVREALGTTVGVSTTGIAGPTGGTPDKPVGTVWVGYADASERHARRHQFVEDRTLNKELFASAALEEARRTLSV.

Belongs to the CinA family.

In Salinibacter ruber (strain DSM 13855 / M31), this protein is CinA-like protein.